The chain runs to 292 residues: Homeobox-leucine zipper protein HOX19 (292 aa).

Disordered regions lie at residues 14–85 (LALG…HSVS), 99–133 (RERA…RLTK), and 217–236 (FAPP…PPAP). The segment covering 28-74 (TDAAAAHRGGCRRPSPSSQCPPLEPSLTLSLPDDAAAGAAATATATA) has biased composition (low complexity). Over residues 99–109 (RERAEEADGER) the composition is skewed to basic and acidic residues. The homeobox DNA-binding region spans 124–183 (STRKKLRLTKEQSALLEDRFREHSTLNPKQKVALAKQLNLRPRQVEVWFQNRRARTKLKQ). The leucine-zipper stretch occupies residues 182 to 226 (KQTEVDCEFLKRCCETLTEENRRLQRELQELRALKFAPPPPSSAA).

The protein belongs to the HD-ZIP homeobox family. Class II subfamily. In terms of tissue distribution, expressed in seedlings, roots, stems, leaf sheaths and blades and panicles.

The protein localises to the nucleus. Probable transcription factor. In Oryza sativa subsp. japonica (Rice), this protein is Homeobox-leucine zipper protein HOX19 (HOX19).